The following is a 62-amino-acid chain: Large ribosomal subunit protein bL28 (62 aa).

This sequence belongs to the bacterial ribosomal protein bL28 family.

This Desulforamulus reducens (strain ATCC BAA-1160 / DSM 100696 / MI-1) (Desulfotomaculum reducens) protein is Large ribosomal subunit protein bL28.